Consider the following 70-residue polypeptide: Protein SlyX homolog (70 aa).

Belongs to the SlyX family.

This chain is Protein SlyX homolog, found in Shewanella pealeana (strain ATCC 700345 / ANG-SQ1).